The chain runs to 721 residues: DNA ligase (721 aa).

Residues 39 to 43, 89 to 90, and glutamate 123 contribute to the NAD(+) site; these read DAEYD and SL. Catalysis depends on lysine 125, which acts as the N6-AMP-lysine intermediate. 4 residues coordinate NAD(+): arginine 146, glutamate 186, lysine 302, and lysine 326. Residues cysteine 418, cysteine 421, cysteine 436, and cysteine 442 each coordinate Zn(2+). The disordered stretch occupies residues 556–588; sequence QASSAAREGEPANADGAYDPATVTPDSDTAGAE. The BRCT domain occupies 641 to 721; it reads TKDSAVAGKT…AWAEIVRQAG (81 aa).

It belongs to the NAD-dependent DNA ligase family. LigA subfamily. It depends on Mg(2+) as a cofactor. Requires Mn(2+) as cofactor.

It catalyses the reaction NAD(+) + (deoxyribonucleotide)n-3'-hydroxyl + 5'-phospho-(deoxyribonucleotide)m = (deoxyribonucleotide)n+m + AMP + beta-nicotinamide D-nucleotide.. DNA ligase that catalyzes the formation of phosphodiester linkages between 5'-phosphoryl and 3'-hydroxyl groups in double-stranded DNA using NAD as a coenzyme and as the energy source for the reaction. It is essential for DNA replication and repair of damaged DNA. The protein is DNA ligase of Novosphingobium aromaticivorans (strain ATCC 700278 / DSM 12444 / CCUG 56034 / CIP 105152 / NBRC 16084 / F199).